Consider the following 114-residue polypeptide: Hydrogenase maturation factor HypA (114 aa).

His2 contacts Ni(2+). 4 residues coordinate Zn(2+): Cys73, Cys76, Cys89, and Cys92.

The protein belongs to the HypA/HybF family.

Functionally, involved in the maturation of [NiFe] hydrogenases. Required for nickel insertion into the metal center of the hydrogenase. This Syntrophus aciditrophicus (strain SB) protein is Hydrogenase maturation factor HypA.